The primary structure comprises 157 residues: Crossover junction endodeoxyribonuclease RuvC (157 aa).

Catalysis depends on residues Asp-7, Glu-67, and Asp-140. Mg(2+)-binding residues include Asp-7, Glu-67, and Asp-140.

Belongs to the RuvC family. In terms of assembly, homodimer which binds Holliday junction (HJ) DNA. The HJ becomes 2-fold symmetrical on binding to RuvC with unstacked arms; it has a different conformation from HJ DNA in complex with RuvA. In the full resolvosome a probable DNA-RuvA(4)-RuvB(12)-RuvC(2) complex forms which resolves the HJ. Mg(2+) serves as cofactor.

The protein localises to the cytoplasm. It catalyses the reaction Endonucleolytic cleavage at a junction such as a reciprocal single-stranded crossover between two homologous DNA duplexes (Holliday junction).. The RuvA-RuvB-RuvC complex processes Holliday junction (HJ) DNA during genetic recombination and DNA repair. Endonuclease that resolves HJ intermediates. Cleaves cruciform DNA by making single-stranded nicks across the HJ at symmetrical positions within the homologous arms, yielding a 5'-phosphate and a 3'-hydroxyl group; requires a central core of homology in the junction. The consensus cleavage sequence is 5'-(A/T)TT(C/G)-3'. Cleavage occurs on the 3'-side of the TT dinucleotide at the point of strand exchange. HJ branch migration catalyzed by RuvA-RuvB allows RuvC to scan DNA until it finds its consensus sequence, where it cleaves and resolves the cruciform DNA. The protein is Crossover junction endodeoxyribonuclease RuvC of Rickettsia akari (strain Hartford).